The sequence spans 255 residues: MRTDGRNNRELRPVHIQPHYIKHAEGSVLIEIGDTRVICTATVEDKVPPFMRGGGKGWITAEYGMLPRATEQRNAREASKGKVSGRTMEIQRLIGRALRSVVELEQLGERTVWIDCDVIQADGGTRTASITGAYVALVLALSKLVAEGKLESLPVRDFLAATSVGIDPEHGVILDLNYSEDARAKVDMNVVMTGAGQFVEIQGTGEEASFSRAELEELLETAQLGIEQLITIQRRVLGEQAALIGEKVEQEGKSE.

Phosphate contacts are provided by residues arginine 86 and 124-126 (GTR).

Belongs to the RNase PH family. In terms of assembly, homohexameric ring arranged as a trimer of dimers.

It catalyses the reaction tRNA(n+1) + phosphate = tRNA(n) + a ribonucleoside 5'-diphosphate. In terms of biological role, phosphorolytic 3'-5' exoribonuclease that plays an important role in tRNA 3'-end maturation. Removes nucleotide residues following the 3'-CCA terminus of tRNAs; can also add nucleotides to the ends of RNA molecules by using nucleoside diphosphates as substrates, but this may not be physiologically important. Probably plays a role in initiation of 16S rRNA degradation (leading to ribosome degradation) during starvation. The protein is Ribonuclease PH of Geobacillus thermodenitrificans (strain NG80-2).